Consider the following 264-residue polypeptide: Thymidylate synthase (264 aa).

Arginine 21 lines the dUMP pocket. Histidine 51 is a binding site for (6R)-5,10-methylene-5,6,7,8-tetrahydrofolate. 126–127 (RR) contacts dUMP. The active-site Nucleophile is cysteine 146. DUMP is bound by residues 166-169 (RSCD), asparagine 177, and 207-209 (HLY). Aspartate 169 is a (6R)-5,10-methylene-5,6,7,8-tetrahydrofolate binding site. Alanine 263 lines the (6R)-5,10-methylene-5,6,7,8-tetrahydrofolate pocket.

It belongs to the thymidylate synthase family. Bacterial-type ThyA subfamily. In terms of assembly, homodimer.

The protein resides in the cytoplasm. It catalyses the reaction dUMP + (6R)-5,10-methylene-5,6,7,8-tetrahydrofolate = 7,8-dihydrofolate + dTMP. It functions in the pathway pyrimidine metabolism; dTTP biosynthesis. Catalyzes the reductive methylation of 2'-deoxyuridine-5'-monophosphate (dUMP) to 2'-deoxythymidine-5'-monophosphate (dTMP) while utilizing 5,10-methylenetetrahydrofolate (mTHF) as the methyl donor and reductant in the reaction, yielding dihydrofolate (DHF) as a by-product. This enzymatic reaction provides an intracellular de novo source of dTMP, an essential precursor for DNA biosynthesis. The polypeptide is Thymidylate synthase (Shigella dysenteriae serotype 1 (strain Sd197)).